We begin with the raw amino-acid sequence, 280 residues long: Phosphonates import ATP-binding protein PhnC (280 aa).

The ABC transporter domain maps to 4–239 (ITVTNLHKSY…VIDDIYGNIQ (236 aa)). Residue 36–43 (GESGAGKS) coordinates ATP. Residues 246 to 280 (GDDANADVAPTTSSDGGTDAAGGPDQQPASDPHLS) are disordered.

This sequence belongs to the ABC transporter superfamily. Phosphonates importer (TC 3.A.1.9.1) family. As to quaternary structure, the complex is composed of two ATP-binding proteins (PhnC), two transmembrane proteins (PhnE) and a solute-binding protein (PhnD).

The protein localises to the cell membrane. It catalyses the reaction phosphonate(out) + ATP + H2O = phosphonate(in) + ADP + phosphate + H(+). In terms of biological role, part of the ABC transporter complex PhnCDE involved in phosphonates import. Responsible for energy coupling to the transport system. The protein is Phosphonates import ATP-binding protein PhnC of Halobacterium salinarum (strain ATCC 700922 / JCM 11081 / NRC-1) (Halobacterium halobium).